The primary structure comprises 278 residues: 4-deoxy-L-threo-5-hexosulose-uronate ketol-isomerase (278 aa).

Positions 196, 198, 203, and 245 each coordinate Zn(2+).

Belongs to the KduI family. Homohexamer. The cofactor is Zn(2+).

It carries out the reaction 5-dehydro-4-deoxy-D-glucuronate = 3-deoxy-D-glycero-2,5-hexodiulosonate. Its pathway is glycan metabolism; pectin degradation; 2-dehydro-3-deoxy-D-gluconate from pectin: step 4/5. Functionally, catalyzes the isomerization of 5-dehydro-4-deoxy-D-glucuronate to 3-deoxy-D-glycero-2,5-hexodiulosonate. In Escherichia coli (strain SMS-3-5 / SECEC), this protein is 4-deoxy-L-threo-5-hexosulose-uronate ketol-isomerase.